Consider the following 509-residue polypeptide: Hexokinase-4, chloroplastic (509 aa).

Residues 1 to 37 (MSAAAAIASPIPAAIAVVQQQRRGRSRGGGSGAAAVR) constitute a chloroplast transit peptide. The 452-residue stretch at 45–496 (SAIAPILADL…SGIGAALLAA (452 aa)) folds into the Hexokinase domain. Residues 100–238 (TGNETGLFYA…GLDMRVSALV (139 aa)) form a hexokinase small subdomain region. ADP-binding residues include Gly114, Thr115, and Asn116. Thr204, Lys205, Asn239, and Asp240 together coordinate D-glucose. Residues 239–485 (NDTVGTLAGA…NRIAIEHTKD (247 aa)) are hexokinase large subdomain. Thr263 lines the ADP pocket. Positions 266, 294, and 324 each coordinate D-glucose. ADP is bound at residue Gly450.

The protein belongs to the hexokinase family. In terms of tissue distribution, expressed in roots, leaves, flowers, immature seeds, endosperm and seed coat.

The protein resides in the plastid. It localises to the chloroplast stroma. It catalyses the reaction a D-hexose + ATP = a D-hexose 6-phosphate + ADP + H(+). The enzyme catalyses D-fructose + ATP = D-fructose 6-phosphate + ADP + H(+). It carries out the reaction D-glucose + ATP = D-glucose 6-phosphate + ADP + H(+). It participates in carbohydrate metabolism; hexose metabolism. It functions in the pathway carbohydrate degradation; glycolysis; D-glyceraldehyde 3-phosphate and glycerone phosphate from D-glucose: step 1/4. Its function is as follows. Fructose and glucose phosphorylating enzyme. This is Hexokinase-4, chloroplastic (HXK4) from Oryza sativa subsp. japonica (Rice).